The primary structure comprises 1373 residues: Capping protein, Arp2/3 and myosin-I linker protein 3 (1373 aa).

The disordered stretch occupies residues 126-151 (RGNADTPEGPRDTSPNSETSTSTTHS). Positions 138–151 (TSPNSETSTSTTHS) are enriched in low complexity. LRR repeat units lie at residues 242–269 (SGSL…VFGE), 272–299 (SCVL…QLLC), 333–358 (ASSL…ALYS), 390–417 (CSHL…AFKQ), 422–446 (AYTL…LLQG), 453–475 (LSDL…ALQE), 480–507 (VTCI…LGKN), 510–536 (LKHL…LVQL), 541–564 (DCSL…LINA), and 568–591 (NTCL…MLSK). Disordered regions lie at residues 864–902 (RTLS…TNID) and 970–1373 (LRHQ…PGTD). Residues 981–997 (PRTTPPGPGRPSVPVPG) are compositionally biased toward pro residues. Residues 1007-1022 (RLDEGLEDFFSRRVMD) show a composition bias toward basic and acidic residues. Positions 1047 to 1062 (QKRRRRGLFHFRRPRS) are enriched in basic residues. Pro residues predominate over residues 1078–1097 (LPPPPPPPPTQESPPSPDPP). The span at 1098 to 1108 (SLGNNSSPCWS) shows a compositional bias: low complexity. Positions 1218-1228 (RRAEATWHIAE) are enriched in basic and acidic residues. The span at 1232–1243 (PNHSCQSPSPAS) shows a compositional bias: polar residues. A compositionally biased stretch (pro residues) spans 1269–1278 (PIGPRPPKPV). The segment covering 1345 to 1358 (QSCDKLEPDRRRPP) has biased composition (basic and acidic residues).

Belongs to the CARMIL family. In terms of tissue distribution, widely expressed, with much higher levels in fetal tissues than in adult ones. Highly expressed in newborn brain.

The protein resides in the cytoplasm. Its subcellular location is the cell membrane. The polypeptide is Capping protein, Arp2/3 and myosin-I linker protein 3 (Carmil3) (Rattus norvegicus (Rat)).